Reading from the N-terminus, the 334-residue chain is Probable tRNA pseudouridine synthase B (334 aa).

D82 serves as the catalytic Nucleophile. The region spanning 250–325 (LPKIWIKDSA…IAVDVEKVFM (76 aa)) is the PUA domain.

Belongs to the pseudouridine synthase TruB family. Type 2 subfamily.

It carries out the reaction uridine(55) in tRNA = pseudouridine(55) in tRNA. Its function is as follows. Could be responsible for synthesis of pseudouridine from uracil-55 in the psi GC loop of transfer RNAs. The chain is Probable tRNA pseudouridine synthase B from Pyrococcus abyssi (strain GE5 / Orsay).